Here is a 277-residue protein sequence, read N- to C-terminus: Pantothenate synthetase (277 aa).

26-33 contributes to the ATP binding site; the sequence is MGNLHEGH. Catalysis depends on His33, which acts as the Proton donor. Gln57 contacts (R)-pantoate. Gln57 is a binding site for beta-alanine. Residue 144–147 participates in ATP binding; it reads GKKD. Residue Gln150 participates in (R)-pantoate binding. ATP is bound by residues Val173 and 181–184; that span reads LSSR.

It belongs to the pantothenate synthetase family. As to quaternary structure, homodimer.

The protein resides in the cytoplasm. The catalysed reaction is (R)-pantoate + beta-alanine + ATP = (R)-pantothenate + AMP + diphosphate + H(+). Its pathway is cofactor biosynthesis; (R)-pantothenate biosynthesis; (R)-pantothenate from (R)-pantoate and beta-alanine: step 1/1. Its function is as follows. Catalyzes the condensation of pantoate with beta-alanine in an ATP-dependent reaction via a pantoyl-adenylate intermediate. The chain is Pantothenate synthetase from Paraburkholderia phymatum (strain DSM 17167 / CIP 108236 / LMG 21445 / STM815) (Burkholderia phymatum).